Consider the following 567-residue polypeptide: MAFASKFARSKTILSFLRPCRQLHSTPKSTGDVTVLSPVKGRRRLPTCWSSSLFPLAIAASATSFAYLNLSNPSISESSSALDSRDITVGGKDSTEAVVKGEYKQVPKELISQLKTILEDNLTTDYDERYFHGKPQNSFHKAVNIPDVVVFPRSEEEVSKILKSCNEYKVPIVPYGGATSIEGHTLAPKGGVCIDMSLMKRVKALHVEDMDVIVEPGIGWLELNEYLEEYGLFFPLDPGPGASIGGMCATRCSGSLAVRYGTMRDNVISLKVVLPNGDVVKTASRARKSAAGYDLTRLIIGSEGTLGVITEITLRLQKIPQHSVVAVCNFPTVKDAADVAIATMMSGIQVSRVELLDEVQIRAINMANGKNLTEAPTLMFEFIGTEAYTREQTQIVQQIASKHNGSDFMFAEEPEAKKELWKIRKEALWACYAMAPGHEAMITDVCVPLSHLAELISRSKKELDASSLLCTVIAHAGDGNFHTCIMFDPSSEEQRREAERLNHFMVHSALSMDGTCTGEHGVGTGKMKYLEKELGIEALQTMKRIKKTLDPNDIMNPGKLIPPHVCF.

The N-terminal 56 residues, 1 to 56, are a transit peptide targeting the mitochondrion; the sequence is MAFASKFARSKTILSFLRPCRQLHSTPKSTGDVTVLSPVKGRRRLPTCWSSSLFPL. In terms of domain architecture, FAD-binding PCMH-type spans 142 to 319; it reads AVNIPDVVVF…TEITLRLQKI (178 aa).

This sequence belongs to the FAD-binding oxidoreductase/transferase type 4 family. As to quaternary structure, homodimer. It depends on FAD as a cofactor. As to expression, expressed in leaves, stems, flowers and roots.

The protein resides in the mitochondrion. It catalyses the reaction (R)-lactate + 2 Fe(III)-[cytochrome c] = 2 Fe(II)-[cytochrome c] + pyruvate + 2 H(+). Its activity is regulated as follows. Inhibited by cyanide ions. In terms of biological role, catalyzes the stereospecific oxidation of D-lactate to pyruvate. Involved in the detoxification of methylglyoxal and D-lactate, but probably not involved in the metabolization of glycolate. The chain is D-lactate dehydrogenase [cytochrome], mitochondrial from Arabidopsis thaliana (Mouse-ear cress).